The following is a 183-amino-acid chain: uncharacterized protein (183 aa).

A helical membrane pass occupies residues 7–23; sequence LFFTALCFGLTGCIAPP.

It localises to the membrane. This is an uncharacterized protein from Haemophilus influenzae (strain ATCC 51907 / DSM 11121 / KW20 / Rd).